Consider the following 123-residue polypeptide: MPTVNQLIRKPRQPKPVRNKVPALKGCPQRRGVCTRVYTTTPKKPNSALRKVAKVRLTTGIEAVCYIPGEGHNLQEHSVVLIRGGRVKDLPGVRYHILRGVLDTQGVKDRKQRRSLYGAKRPK.

D89 is modified (3-methylthioaspartic acid).

Belongs to the universal ribosomal protein uS12 family. Part of the 30S ribosomal subunit. Contacts proteins S8 and S17. May interact with IF1 in the 30S initiation complex.

With S4 and S5 plays an important role in translational accuracy. Its function is as follows. Interacts with and stabilizes bases of the 16S rRNA that are involved in tRNA selection in the A site and with the mRNA backbone. Located at the interface of the 30S and 50S subunits, it traverses the body of the 30S subunit contacting proteins on the other side and probably holding the rRNA structure together. The combined cluster of proteins S8, S12 and S17 appears to hold together the shoulder and platform of the 30S subunit. In Caulobacter sp. (strain K31), this protein is Small ribosomal subunit protein uS12.